The sequence spans 901 residues: Protein translocase subunit SecA (901 aa).

Residues Q87, 105-109, and D512 each bind ATP; that span reads GEGKT. The interval 852 to 901 is disordered; it reads AQMQQLSHQDDDSAAAAALAAQTGDRKVGRNDPCPCGSGKKYKQCHGRLS. The Zn(2+) site is built by C885, C887, C896, and H897. Residues 891–901 are compositionally biased toward basic residues; sequence KKYKQCHGRLS.

This sequence belongs to the SecA family. As to quaternary structure, monomer and homodimer. Part of the essential Sec protein translocation apparatus which comprises SecA, SecYEG and auxiliary proteins SecDF-YajC and YidC. Requires Zn(2+) as cofactor.

Its subcellular location is the cell inner membrane. It localises to the cytoplasm. The catalysed reaction is ATP + H2O + cellular proteinSide 1 = ADP + phosphate + cellular proteinSide 2.. Its function is as follows. Part of the Sec protein translocase complex. Interacts with the SecYEG preprotein conducting channel. Has a central role in coupling the hydrolysis of ATP to the transfer of proteins into and across the cell membrane, serving both as a receptor for the preprotein-SecB complex and as an ATP-driven molecular motor driving the stepwise translocation of polypeptide chains across the membrane. This Citrobacter koseri (strain ATCC BAA-895 / CDC 4225-83 / SGSC4696) protein is Protein translocase subunit SecA.